Here is a 327-residue protein sequence, read N- to C-terminus: COP9 signalosome complex subunit 7 (327 aa).

In terms of domain architecture, PCI spans valine 4–valine 165. Disordered stretches follow at residues glycine 233–lysine 260 and glycine 276–serine 327. Gly residues predominate over residues glutamine 236–lysine 255. A compositionally biased stretch (basic residues) spans glycine 315–serine 327.

The protein belongs to the CSN7/EIF3M family. CSN7 subfamily. As to quaternary structure, component of the COP9 signalosome (CSN) complex. Present in uninduced vegetative hyphae, induced conidiating cultures and in both conidiospores and ascospores.

The protein resides in the cytoplasm. Its subcellular location is the nucleus. Its function is as follows. Component of the COP9 signalosome (CSN) complex that acts as an regulator of the ubiquitin (Ubl) conjugation pathway by mediating the deneddylation of the cullin subunit of SCF-type E3 ubiquitin-protein ligase complexes. The CSN complex seems to link protein degradation to sexual development. May be required for sporulation only at elevated temperatures. The protein is COP9 signalosome complex subunit 7 (csnG) of Emericella nidulans (strain FGSC A4 / ATCC 38163 / CBS 112.46 / NRRL 194 / M139) (Aspergillus nidulans).